A 122-amino-acid chain; its full sequence is Large ribosomal subunit protein uL14c (122 aa).

This sequence belongs to the universal ribosomal protein uL14 family. As to quaternary structure, part of the 50S ribosomal subunit.

Its subcellular location is the plastid. The protein resides in the chloroplast. Binds to 23S rRNA. The polypeptide is Large ribosomal subunit protein uL14c (Panax ginseng (Korean ginseng)).